Consider the following 260-residue polypeptide: Putative protein phosphatase 2C-like protein 44 (260 aa).

Residues 41–259 (YYTVDRLSYA…SSISCVVIRF (219 aa)) form the PPM-type phosphatase domain.

It belongs to the PP2C family.

This chain is Putative protein phosphatase 2C-like protein 44, found in Arabidopsis thaliana (Mouse-ear cress).